The chain runs to 339 residues: Glycerol-3-phosphate dehydrogenase [NAD(P)+] (339 aa).

The NADPH site is built by Ser15, Tyr16, His36, and Lys110. The sn-glycerol 3-phosphate site is built by Lys110, Gly139, and Thr141. Ala143 contacts NADPH. 5 residues coordinate sn-glycerol 3-phosphate: Lys195, Asp248, Ser258, Arg259, and Asn260. Lys195 serves as the catalytic Proton acceptor. Arg259 is a binding site for NADPH. NADPH contacts are provided by Val283 and Glu285.

The protein belongs to the NAD-dependent glycerol-3-phosphate dehydrogenase family.

Its subcellular location is the cytoplasm. It carries out the reaction sn-glycerol 3-phosphate + NAD(+) = dihydroxyacetone phosphate + NADH + H(+). It catalyses the reaction sn-glycerol 3-phosphate + NADP(+) = dihydroxyacetone phosphate + NADPH + H(+). It functions in the pathway membrane lipid metabolism; glycerophospholipid metabolism. Catalyzes the reduction of the glycolytic intermediate dihydroxyacetone phosphate (DHAP) to sn-glycerol 3-phosphate (G3P), the key precursor for phospholipid synthesis. The chain is Glycerol-3-phosphate dehydrogenase [NAD(P)+] from Enterobacter sp. (strain 638).